Reading from the N-terminus, the 393-residue chain is S-adenosylmethionine synthase (393 aa).

An ATP-binding site is contributed by His16. Asp18 provides a ligand contact to Mg(2+). Glu44 contributes to the K(+) binding site. Glu57 and Gln100 together coordinate L-methionine. The interval 100 to 110 (QSNDIAQGVDH) is flexible loop. Residues 167–169 (DAK), 238–239 (RF), Asp247, 253–254 (RK), Ala270, and Lys274 each bind ATP. Asp247 contributes to the L-methionine binding site. An L-methionine-binding site is contributed by Lys278.

Belongs to the AdoMet synthase family. As to quaternary structure, homotetramer; dimer of dimers. Mg(2+) is required as a cofactor. The cofactor is K(+).

It is found in the cytoplasm. The catalysed reaction is L-methionine + ATP + H2O = S-adenosyl-L-methionine + phosphate + diphosphate. Its pathway is amino-acid biosynthesis; S-adenosyl-L-methionine biosynthesis; S-adenosyl-L-methionine from L-methionine: step 1/1. Its function is as follows. Catalyzes the formation of S-adenosylmethionine (AdoMet) from methionine and ATP. The overall synthetic reaction is composed of two sequential steps, AdoMet formation and the subsequent tripolyphosphate hydrolysis which occurs prior to release of AdoMet from the enzyme. This Acidovorax ebreus (strain TPSY) (Diaphorobacter sp. (strain TPSY)) protein is S-adenosylmethionine synthase.